Reading from the N-terminus, the 511-residue chain is Cytochrome P450 93B2 (511 aa).

A helical transmembrane segment spans residues 4–24 (LQLIFLLFFFPTLLFLYCLPY). Cysteine 447 provides a ligand contact to heme.

This sequence belongs to the cytochrome P450 family. The cofactor is heme.

The protein localises to the membrane. The catalysed reaction is a flavanone + reduced [NADPH--hemoprotein reductase] + O2 = a flavone + oxidized [NADPH--hemoprotein reductase] + 2 H2O + H(+). Its pathway is secondary metabolite biosynthesis; flavonoid biosynthesis. Functions as a flavone synthase II (FNSII) that catalyzes the direct conversion of flavanones to flavones. In vitro, can convert liquiritigenin, naringenin and eriodictyol to 7,4'-dihydroxyflavone, apigenin and luteolin, respectively. The polypeptide is Cytochrome P450 93B2 (Gerbera hybrida (Daisy)).